Here is a 182-residue protein sequence, read N- to C-terminus: MPIKPLVILPDPILREISKPVEHIDSTIQQLADDMLETMYNAGGIGLAAIQVGIPLRMLVVDVSIFTSIFEPDAPQDPIIVINPEILWLSDERNICMEGCLSIPGYSAEVERPKRLCIRYRNREGEQKEIEADNILATCLQHEIDHLNGCLFIDHLSKVKRNMVIRKFEKRAKENNLEKEIL.

Fe cation-binding residues include Cys-100 and His-142. Residue Glu-143 is part of the active site. Fe cation is bound at residue His-146.

Belongs to the polypeptide deformylase family. The cofactor is Fe(2+).

The catalysed reaction is N-terminal N-formyl-L-methionyl-[peptide] + H2O = N-terminal L-methionyl-[peptide] + formate. Its function is as follows. Removes the formyl group from the N-terminal Met of newly synthesized proteins. Requires at least a dipeptide for an efficient rate of reaction. N-terminal L-methionine is a prerequisite for activity but the enzyme has broad specificity at other positions. This Bartonella bacilliformis (strain ATCC 35685 / KC583 / Herrer 020/F12,63) protein is Peptide deformylase.